We begin with the raw amino-acid sequence, 156 residues long: Transcription elongation factor GreA (156 aa).

Residues 44–67 (ENAEYEAAKEKQAMIEGRIQDLCQ) adopt a coiled-coil conformation.

This sequence belongs to the GreA/GreB family.

Its function is as follows. Necessary for efficient RNA polymerase transcription elongation past template-encoded arresting sites. The arresting sites in DNA have the property of trapping a certain fraction of elongating RNA polymerases that pass through, resulting in locked ternary complexes. Cleavage of the nascent transcript by cleavage factors such as GreA or GreB allows the resumption of elongation from the new 3'terminus. GreA releases sequences of 2 to 3 nucleotides. The protein is Transcription elongation factor GreA of Syntrophobacter fumaroxidans (strain DSM 10017 / MPOB).